Reading from the N-terminus, the 264-residue chain is NAD kinase 1 (264 aa).

The active-site Proton acceptor is the Asp45. NAD(+)-binding positions include Asp45 to Gly46, Gly46, Asn122 to Glu123, Arg148, Asp150, Ser158, Thr161 to Ser166, and His223.

This sequence belongs to the NAD kinase family. In terms of assembly, homotetramer. It depends on a divalent metal cation as a cofactor.

Its subcellular location is the cytoplasm. It carries out the reaction NAD(+) + ATP = ADP + NADP(+) + H(+). With respect to regulation, competitively inhibited by 5'-thioacetyladenosine (TAA) and di-(5'-thioadenosine) (DTA). Functionally, involved in the regulation of the intracellular balance of NAD and NADP, and is a key enzyme in the biosynthesis of NADP. Catalyzes specifically the phosphorylation on 2'-hydroxyl of the adenosine moiety of NAD to yield NADP. The protein is NAD kinase 1 of Listeria monocytogenes serovar 1/2a (strain ATCC BAA-679 / EGD-e).